We begin with the raw amino-acid sequence, 201 residues long: Akirin (201 aa).

Residues 1-133 (MACATLKRAL…PRRPDSPQNL (133 aa)) are disordered. Residues 20 to 25 (PKRRRC) carry the Nuclear localization signal motif. Ser-39 and Ser-41 each carry phosphoserine. 2 stretches are compositionally biased toward polar residues: residues 44–57 (GPST…TPSN) and 65–75 (EPSPFSESSLA). Position 67 is a phosphoserine (Ser-67). Positions 112–122 (SESSGSEMGPE) are enriched in low complexity. Residues Ser-123 and Ser-129 each carry the phosphoserine modification.

The protein belongs to the akirin family. In terms of assembly, interacts with dmap1. Interacts with bap60 and rel; interaction is immune stimulation-dependent; activates selected rel target gene promoters. Interacts with bap55; interaction is immune stimulation-dependent. Interacts with twi. In terms of processing, polyubiquitinated via 'Lys-63'-linked ubiquitin by Hyd, promoting interaction with rel. Ubiquitous.

The protein resides in the nucleus. In terms of biological role, molecular adapter that acts as a bridge between a variety of multiprotein complexes, and which is required for embryonic development and for normal innate immune response. Acts as a regulator of embryonic myogenesis by bridging Twist (twi) with the SWI/SNF-like Brahma complex, promoting expression of twi-regulated genes during myogenesis. Effector of immune deficiency pathway (Imd) by acting either downstream of, or at the level of, the NF-kappa-B factor Relish (Rel). Acts by bridging the NF-kappa-B factor Rel and the Brahma complex through bap60 interaction, leading to activation a subset of NF-kappa-B factor Relish (Rel) effector genes. Not part of the Toll pathway. Required for the formation of the heart by promoting expression ot tinman (tin). This chain is Akirin, found in Drosophila melanogaster (Fruit fly).